Reading from the N-terminus, the 93-residue chain is Putative regulatory protein Amet_2791 (93 aa).

It belongs to the RemA family.

The polypeptide is Putative regulatory protein Amet_2791 (Alkaliphilus metalliredigens (strain QYMF)).